Reading from the N-terminus, the 190-residue chain is MEVILLERVAKLGQMGETVNVRPGYARNFLLARGKALRATENNKKHFEAQRAQLEARNLERRNEAQTVAEKLDGQSFVLIRQSGETGVLYGSVSTRDLAEVVTKEGFTVERGQFVLNQPIKTLGLHTVPVTLHPEVEVKVTVNIARSPEEAERQARGESVTEREQFNLDDLGLEVGQALADAGEGADDRG.

The protein belongs to the bacterial ribosomal protein bL9 family.

Its function is as follows. Binds to the 23S rRNA. This is Large ribosomal subunit protein bL9 from Methylorubrum populi (strain ATCC BAA-705 / NCIMB 13946 / BJ001) (Methylobacterium populi).